Here is a 527-residue protein sequence, read N- to C-terminus: (3S)-3-amino-3-(3-chloro-4-hydroxyphenyl)propanoyl-[peptidyl-carrier protein SgcC2] monooxygenase (527 aa).

Residues 1-10 (MPHGAEREAS) are compositionally biased toward basic and acidic residues. The disordered stretch occupies residues 1-22 (MPHGAEREASPAEESAGTRPLT). FAD-binding positions include 161 to 163 (HAF), 167 to 170 (PVDR), and Thr202.

Belongs to the FADH(2)-utilizing monooxygenase family. In terms of assembly, homotetramer.

The enzyme catalyses (3S)-3-amino-3-(3-chloro-4-hydroxyphenyl)propanoyl-[SgcC2 peptidyl-carrier protein] + FADH2 + O2 = (3S)-3-amino-3-(3-chloro-4,5-dihydroxyphenyl)propanoyl-[SgcC2 peptidyl-carrier protein] + FAD + H2O + H(+). It participates in antibiotic biosynthesis. With respect to regulation, the SgcE6-SgcC hydroxylation activity decreases in the presence of excess FAD. In terms of biological role, oxygenase component of a two-component system involved in the biosynthesis of the enediyne antitumor antibiotic C-1027. Uses FADH(2) supplied by SgcE6 to catalyze the C-5 hydroxylation of (S)-3-chloro-beta-tyrosyl-S-SgcC2. Can also efficiently catalyze the regioselective hydroxylation of other 3-substituted beta-tyrosyl-S-SgcC2 analogs, including the bromo-, iodo-, fluoro-, and methyl-substituted analogs, but does not accept 3-hydroxy-beta-tyrosyl-S-SgcC2 as a substrate. Is only active with SgcC2 (peptidyl carrier protein)-tethered substrates. The polypeptide is (3S)-3-amino-3-(3-chloro-4-hydroxyphenyl)propanoyl-[peptidyl-carrier protein SgcC2] monooxygenase (Streptomyces globisporus).